The following is a 440-amino-acid chain: Tyrosine--tRNA ligase (440 aa).

Tyrosine 46 serves as a coordination point for L-tyrosine. The short motif at 51–60 (PTAPSLHIGN) is the 'HIGH' region element. Tyrosine 181 and glutamine 185 together coordinate L-tyrosine. The short motif at 241-245 (KFGKS) is the 'KMSKS' region element. Lysine 244 contacts ATP. The S4 RNA-binding domain maps to 373-430 (DRIAQAGVSAGLFKSISEARKTIKSGGVYVNNVRVEDEEQLLGDGDFLKGRFVVLRRG).

It belongs to the class-I aminoacyl-tRNA synthetase family. TyrS type 1 subfamily. As to quaternary structure, homodimer.

It is found in the cytoplasm. It carries out the reaction tRNA(Tyr) + L-tyrosine + ATP = L-tyrosyl-tRNA(Tyr) + AMP + diphosphate + H(+). In terms of biological role, catalyzes the attachment of tyrosine to tRNA(Tyr) in a two-step reaction: tyrosine is first activated by ATP to form Tyr-AMP and then transferred to the acceptor end of tRNA(Tyr). The protein is Tyrosine--tRNA ligase of Bifidobacterium animalis subsp. lactis (strain AD011).